The following is a 457-amino-acid chain: MDKLDLVNDGLDIIDFIQKNQKEIQKTYGRSSIQQPSTKDRTRAWEDFLQSTSGEHEQAEGGMPKNDGGTEGRNVEDLSSVTSSDGTIGQRVSNTRAWAEDPDDIQLDPMVTDVVYHDHGGECTGHGPSSSPERGWSYHMSGTHDGNVRAVPDTKVLPNAPKTTVPEEVREIDLIGLEDKFASAGLNPAAVPFVPKNQSTPTEEPPVIPEYYYGSGRRGDLSKSPPRGNVNLDSIKIYTSDDEDENQLEYEDEFAKSSSEVVIDTTPEDNDSINQEEVVGDPSDQGLEHPFPLGKFPEKEETPDVRRKDSLMQDSCKRGGVPKRLPMLSEEFECSGSDDPIIQELEREGSHPGGSLRLREPPQSSGNSRNQPDRQLKTGDAASPGGVQRPGTPMPKSRIMPIKKGHRREVSICWDGRRAWVEEWCNPVCSRITPQPRKQECYCGECPTECSQCCHEE.

2 disordered regions span residues 26–104 and 193–403; these read KTYG…DPDD and FVPK…MPIK. Composition is skewed to polar residues over residues 28 to 37 and 77 to 96; these read YGRSSIQQPS and DLSSVTSSDGTIGQRVSNTR. Over residues 240–252 the composition is skewed to acidic residues; sequence SDDEDENQLEYED. Phosphoserine; by host is present on Ser-257. Positions 296–317 are enriched in basic and acidic residues; it reads FPEKEETPDVRRKDSLMQDSCK. Ser-350 carries the phosphoserine; by host modification. The Zn(2+) site is built by His-406, Cys-425, Cys-429, Cys-441, Cys-443, Cys-446, Cys-450, and Cys-453.

It belongs to the paramyxoviruses V protein family. Interacts with host IFIH1/MDA5, DHX58/LGP2, STAT1 and STAT2.

It is found in the host cytoplasm. Plays an essential role in the inhibition of host immune response. Prevents the establishment of cellular antiviral state by blocking interferon-alpha/beta (IFN-alpha/beta) production and signaling pathway. Interacts with host IFIH1/MDA5 and DHX58/LGP2 to inhibit the transduction pathway involved in the activation of IFN-beta promoter, thus protecting the virus against cell antiviral state. Blocks the type I interferon signaling pathway by interacting with host STAT1 and STAT2 and thereby inhibiting their phosphorylation and subsequent nuclear translocation. Efficiently blocks the type II interferon signaling pathway. The sequence is that of Non-structural protein V (P/V/C) from Hendra virus (isolate Horse/Autralia/Hendra/1994).